The chain runs to 393 residues: Methyltransferase-like protein 22 (393 aa).

Positions 54-87 (WTDSGAEDSGPTDVSTEEMPPAGSGSGHSHEDLS) are disordered. S120 is subject to Phosphoserine.

This sequence belongs to the methyltransferase superfamily. METTL22 family. Interacts with members of the heat shock protein 90 and 70 families; these proteins probably are methylation substrates.

It is found in the nucleus. It catalyses the reaction L-lysyl-[protein] + 3 S-adenosyl-L-methionine = N(6),N(6),N(6)-trimethyl-L-lysyl-[protein] + 3 S-adenosyl-L-homocysteine + 3 H(+). Functionally, protein N-lysine methyltransferase. Trimethylates KIN at Lys-135 (in vitro). This Mus musculus (Mouse) protein is Methyltransferase-like protein 22 (Mettl22).